Here is a 436-residue protein sequence, read N- to C-terminus: UPF0597 protein YhaM (436 aa).

It belongs to the UPF0597 family.

The protein is UPF0597 protein YhaM of Escherichia coli O7:K1 (strain IAI39 / ExPEC).